The sequence spans 687 residues: Hemin receptor (687 aa).

A signal peptide spans 1–28 (MPRSTSDRFRWSPLSLAIACTLSLAVQA). The short motif at 44 to 51 (DTMVVTAT) is the TonB box element. Residues 56-167 (SSFEAPMMVT…LGGVISYETV (112 aa)) form the TBDR plug domain. The TBDR beta-barrel domain occupies 178-687 (NSGYRVYSAA…NAKFFVSYQW (510 aa)). A disordered region spans residues 319–338 (ARPQGTPEEGRKQTTKGGKL). The segment covering 326–338 (EEGRKQTTKGGKL) has biased composition (basic and acidic residues). Positions 670–687 (QGVPQDGRNAKFFVSYQW) match the TonB C-terminal box motif.

This sequence belongs to the TonB-dependent receptor family.

The protein localises to the cell outer membrane. In terms of biological role, this protein is involved in the initial step of iron uptake by binding hemin, an iron chelatin siderophore that allows the bacteria to extract iron from the environment. This chain is Hemin receptor (hemR), found in Yersinia enterocolitica.